The sequence spans 571 residues: External alternative NAD(P)H-ubiquinone oxidoreductase B1, mitochondrial (571 aa).

A mitochondrion-targeting transit peptide spans 1 to 35 (MTLLSSLGRASRSAPLASKLLLLGTLSGGSIVAYA). 51-81 (KVVVLGTGWAGISFLKDLDITSYDVQVVSPQ) contributes to the FAD binding site. 215 to 251 (LHFVIVGGGPTGVEFAAELHDFIIEDITKIYPSVKEL) provides a ligand contact to NAD(+). The region spanning 372–407 (KILGDIANIFKAADADNSGTLTMEELEGVVDDIIVR) is the EF-hand domain. Residues Asp-385, Asp-387, Ser-389, Thr-391, and Glu-396 each coordinate Ca(2+). The Microbody targeting signal motif lies at 562–571 (YIFGRDSSRI).

The protein belongs to the NADH dehydrogenase family. It depends on FAD as a cofactor. In terms of tissue distribution, expressed in seedlings, roots, cotyledons, leaves, stems, buds and flowers.

The protein resides in the mitochondrion inner membrane. The protein localises to the peroxisome. The catalysed reaction is a quinone + NADH + H(+) = a quinol + NAD(+). The enzyme catalyses a ubiquinone + NADH + H(+) = a ubiquinol + NAD(+). Activity is calcium-dependent with a more pronounced effect at higher pH. Its function is as follows. Alternative NADH-ubiquinone oxidoreductase which catalyzes the oxidation of mitochondrial NADH does not translocate protons across the inner mitochondrial membrane. Calcium-dependent NAD(P)H dehydrogenase. Binds calcium ions. The protein is External alternative NAD(P)H-ubiquinone oxidoreductase B1, mitochondrial (NDB1) of Arabidopsis thaliana (Mouse-ear cress).